A 1083-amino-acid chain; its full sequence is Solute carrier family 12 member 7 (1083 aa).

Residues 1-52 form a disordered region; that stretch reads MPTNFTVVPVEAHADGGGDETAERTEAPGTPEGPEPERPSPGDGNPRENSPF. Residues 1 to 119 lie on the Cytoplasmic side of the membrane; the sequence is MPTNFTVVPV…RREAKAPRMG (119 aa). Basic and acidic residues predominate over residues 12–26; the sequence is AHADGGGDETAERTE. At Thr30 the chain carries Phosphothreonine. Residues Ser50 and Ser62 each carry the phosphoserine modification. A discontinuously helical transmembrane segment spans residues 120 to 142; it reads TFIGVYLPCLQNILGVILFLRLT. The K(+) site is built by Asn131 and Ile132. Val135 lines the chloride pocket. Residues 143–149 lie on the Extracellular side of the membrane; it reads WIVGVAG. Residues 150-172 traverse the membrane as a helical segment; that stretch reads VLESFLIVAMCCTCTMLTAISMS. The Cytoplasmic segment spans residues 173-196; it reads AIATNGVVPAGGSYYMISRSLGPE. A helical transmembrane segment spans residues 197–225; it reads FGGAVGLCFYLGTTFAGAMYILGTIEIFL. Over 226–249 the chain is Extracellular; that stretch reads TYISPGAAIFQAEAAGGEAAAMLH. 2 helical membrane-spanning segments follow: residues 250 to 270 and 272 to 300; these read NMRVYGTCTLVLMALVVFVGV and YVNKLALVFLACVVLSILAIYAGVIKSAF. The Extracellular portion of the chain corresponds to 301–419; it reads DPPDIPVCLL…PYVLTDIAAS (119 aa). Disulfide bonds link Cys308/Cys323 and Cys343/Cys352. Asn312 carries N-linked (GlcNAc...) asparagine glycosylation. Asn360 carries an N-linked (GlcNAc...) asparagine glycan. The helical transmembrane segment at 420-440 threads the bilayer; it reads FTLLVGIYFPSVTGIMAGSNR. Pro429 and Thr432 together coordinate K(+). Residue Pro429 coordinates chloride. Chloride-binding residues include Gly433 and Ile434. The Cytoplasmic portion of the chain corresponds to 441–450; sequence SGDLKDAQKS. A helical transmembrane segment spans residues 451-473; it reads IPTGTILAIVTTSFIYLSCIVLF. Residues 474–504 lie on the Extracellular side of the membrane; the sequence is GACIEGVVLRDKFGEALQGNLVIGMLAWPSP. The chain crosses the membrane as a helical span at residues 505–531; the sequence is WVIVIGSFFSTCGAGLQSLTGAPRLLQ. At 532–554 the chain is on the cytoplasmic side; it reads AIARDGIVPFLQVFGHGKANGEP. 2 helical membrane-spanning segments follow: residues 555–571 and 574–598; these read TWALLLTVLICETGILI and LDSVAPILSMFFLMCYLFVNLACAV. Tyr589 is a binding site for chloride. Residues 599-612 are Cytoplasmic-facing; the sequence is QTLLRTPNWRPRFK. The next 2 membrane-spanning stretches (helical) occupy residues 613–632 and 636–651; these read FYHWTLSFLGMSLCLALMFI and YYALSAMLIAGCIYKY. The Cytoplasmic segment spans residues 652–1083; sequence IEYRGAEKEW…GGREVITIYS (432 aa). The tract at residues 664–680 is scissor helix; that stretch reads GIRGLSLNAARYALLRV. Phosphothreonine is present on residues Thr973 and Thr980.

The protein belongs to the SLC12A transporter family. K/Cl co-transporter subfamily. In terms of assembly, homodimer; adopts a domain-swap conformation at the scissor helices connecting the transmembrane domain and C-terminal domain. Heterodimer with K-Cl cotransporter SLC12A5. Detected in muscle, brain, lung, heart and kidney.

It is found in the cell membrane. The enzyme catalyses K(+)(in) + chloride(in) = K(+)(out) + chloride(out). Activated by N-ethylmaleimide (NEM). Inhibited by furosemide, DIDS and bumetanide. The inhibition is much stronger in the presence of 50 mM K(+) in the uptake medium. Inhibited by DIOA. Inhibited by WNK3. Functionally, mediates electroneutral potassium-chloride cotransport when activated by cell swelling. May mediate K(+) uptake into Deiters' cells in the cochlea and contribute to K(+) recycling in the inner ear. Important for the survival of cochlear outer and inner hair cells and the maintenance of the organ of Corti. May be required for basolateral Cl(-) extrusion in the kidney and contribute to renal acidification. The protein is Solute carrier family 12 member 7 of Homo sapiens (Human).